Reading from the N-terminus, the 154-residue chain is uncharacterized protein (154 aa).

The protein resides in the mitochondrion. This is an uncharacterized protein from Vicia faba (Broad bean).